The sequence spans 238 residues: uncharacterized protein (238 aa).

The N-terminal stretch at 1–19 (MKINLFFVFLFELLHFVAA) is a signal peptide. Residues 20 to 197 (YSCEGDESAA…LALYGHLSQK (178 aa)) are Lumenal-facing. A helical membrane pass occupies residues 198-216 (YTPLGMNVAIFGISAYIMY). At 217–238 (RSSKKAKQKQAAAAAAAAAKKK) the chain is on the cytoplasmic side.

It is found in the endoplasmic reticulum membrane. This is an uncharacterized protein from Schizosaccharomyces pombe (strain 972 / ATCC 24843) (Fission yeast).